The sequence spans 124 residues: Small ribosomal subunit protein bS6 (124 aa).

Residues 97–124 form a disordered region; sequence EQGPSAMMRRGDRDRSNRSDRRRDRDAA. Positions 105-124 are enriched in basic and acidic residues; that stretch reads RRGDRDRSNRSDRRRDRDAA.

This sequence belongs to the bacterial ribosomal protein bS6 family.

Its function is as follows. Binds together with bS18 to 16S ribosomal RNA. The chain is Small ribosomal subunit protein bS6 from Zymomonas mobilis subsp. mobilis (strain ATCC 31821 / ZM4 / CP4).